The chain runs to 210 residues: Large ribosomal subunit protein uL3 (210 aa).

Positions 131–155 are disordered; that stretch reads GPMSHGSKYHRRVGSMSATTDPGRT.

It belongs to the universal ribosomal protein uL3 family. Part of the 50S ribosomal subunit. Forms a cluster with proteins L14 and L19.

Functionally, one of the primary rRNA binding proteins, it binds directly near the 3'-end of the 23S rRNA, where it nucleates assembly of the 50S subunit. The polypeptide is Large ribosomal subunit protein uL3 (Thermoanaerobacter sp. (strain X514)).